Consider the following 355-residue polypeptide: Beta-1,2-mannobiose phosphorylase (355 aa).

Residues asparagine 31, arginine 46, arginine 89, 140–141 (ED), lysine 188, tyrosine 273, and aspartate 333 each bind beta-D-Manp-(1-&gt;2)-beta-D-Manp-(1-&gt;2)-D-Manp.

The protein belongs to the glycosyl hydrolase 130 family. In terms of assembly, homodimer.

It catalyses the reaction beta-D-mannopyranosyl-(1-&gt;2)-D-mannopyranose + phosphate = alpha-D-mannose 1-phosphate + D-mannose. In terms of biological role, catalyzes the reversible phosphorolysis of 1,2-beta-oligomannan. In phosphorolytic reactions, prefers beta-1,2-mannobiose (beta-1,2-Man2) as substrate, but can also use beta-1,2-mannotriose. The protein is Beta-1,2-mannobiose phosphorylase of Listeria innocua serovar 6a (strain ATCC BAA-680 / CLIP 11262).